The following is a 275-amino-acid chain: Translation initiation factor 2 subunit alpha (275 aa).

Positions 12-83 (GEFVVATVKN…EKGHIDLSLK (72 aa)) constitute an S1 motif domain.

This sequence belongs to the eIF-2-alpha family. In terms of assembly, heterotrimer composed of an alpha, a beta and a gamma chain.

In terms of biological role, eIF-2 functions in the early steps of protein synthesis by forming a ternary complex with GTP and initiator tRNA. The polypeptide is Translation initiation factor 2 subunit alpha (Thermococcus kodakarensis (strain ATCC BAA-918 / JCM 12380 / KOD1) (Pyrococcus kodakaraensis (strain KOD1))).